We begin with the raw amino-acid sequence, 170 residues long: Peptide deformylase (170 aa).

Residues C93 and H135 each coordinate Fe cation. The active site involves E136. Residue H139 participates in Fe cation binding.

This sequence belongs to the polypeptide deformylase family. The cofactor is Fe(2+).

The catalysed reaction is N-terminal N-formyl-L-methionyl-[peptide] + H2O = N-terminal L-methionyl-[peptide] + formate. Removes the formyl group from the N-terminal Met of newly synthesized proteins. Requires at least a dipeptide for an efficient rate of reaction. N-terminal L-methionine is a prerequisite for activity but the enzyme has broad specificity at other positions. This Acidobacterium capsulatum (strain ATCC 51196 / DSM 11244 / BCRC 80197 / JCM 7670 / NBRC 15755 / NCIMB 13165 / 161) protein is Peptide deformylase.